We begin with the raw amino-acid sequence, 247 residues long: PABIR family member 2 (247 aa).

The tract at residues 1 to 23 is disordered; sequence MAQEKMELDLEPDTSYGGTLRRS. The residue at position 2 (A2) is an N-acetylalanine. Phosphoserine is present on residues S25, S33, S50, S58, and L63. Residues 82-104 are disordered; it reads ISQSWDESLSLSDSDFDKPEKLY. Residues 83 to 94 are compositionally biased toward low complexity; sequence SQSWDESLSLSD. Residue T112 is modified to Phosphothreonine. Phosphoserine is present on residues S115 and S119. R122 carries the post-translational modification Omega-N-methylarginine. 3 disordered regions span residues 129–152, 158–177, and 202–230; these read VSSS…SQSP, PSVL…SQPK, and DILD…SPVA. Phosphoserine occurs at positions 137 and 141. Residues 166-176 are compositionally biased toward basic and acidic residues; sequence RKGEMETESQP. Low complexity predominate over residues 202–216; the sequence is DILDGSSSSSGLSSD.

This sequence belongs to the FAM122 family. Isoform 3 and isoform 4 are phosphorylated on Ser-62 and Ser-64.

In Homo sapiens (Human), this protein is PABIR family member 2.